The following is a 54-amino-acid chain: Large ribosomal subunit protein bL33C (54 aa).

Belongs to the bacterial ribosomal protein bL33 family.

The sequence is that of Large ribosomal subunit protein bL33C (rpmG3) from Streptomyces coelicolor (strain ATCC BAA-471 / A3(2) / M145).